The following is a 449-amino-acid chain: Trigger factor (449 aa).

Residues 173–258 (GDRVTVDFVG…MKKVEWPHLP (86 aa)) form the PPIase FKBP-type domain.

This sequence belongs to the FKBP-type PPIase family. Tig subfamily.

Its subcellular location is the cytoplasm. It catalyses the reaction [protein]-peptidylproline (omega=180) = [protein]-peptidylproline (omega=0). In terms of biological role, involved in protein export. Acts as a chaperone by maintaining the newly synthesized protein in an open conformation. Functions as a peptidyl-prolyl cis-trans isomerase. In Burkholderia thailandensis (strain ATCC 700388 / DSM 13276 / CCUG 48851 / CIP 106301 / E264), this protein is Trigger factor.